Reading from the N-terminus, the 99-residue chain is Aspartyl/glutamyl-tRNA(Asn/Gln) amidotransferase subunit C (99 aa).

It belongs to the GatC family. As to quaternary structure, heterotrimer of A, B and C subunits.

It carries out the reaction L-glutamyl-tRNA(Gln) + L-glutamine + ATP + H2O = L-glutaminyl-tRNA(Gln) + L-glutamate + ADP + phosphate + H(+). The catalysed reaction is L-aspartyl-tRNA(Asn) + L-glutamine + ATP + H2O = L-asparaginyl-tRNA(Asn) + L-glutamate + ADP + phosphate + 2 H(+). Its function is as follows. Allows the formation of correctly charged Asn-tRNA(Asn) or Gln-tRNA(Gln) through the transamidation of misacylated Asp-tRNA(Asn) or Glu-tRNA(Gln) in organisms which lack either or both of asparaginyl-tRNA or glutaminyl-tRNA synthetases. The reaction takes place in the presence of glutamine and ATP through an activated phospho-Asp-tRNA(Asn) or phospho-Glu-tRNA(Gln). This chain is Aspartyl/glutamyl-tRNA(Asn/Gln) amidotransferase subunit C, found in Paraburkholderia phymatum (strain DSM 17167 / CIP 108236 / LMG 21445 / STM815) (Burkholderia phymatum).